Consider the following 188-residue polypeptide: GTPase KRas (188 aa).

Methionine 1 carries the N-acetylmethionine modification. Residue threonine 2 is modified to N-acetylthreonine; in GTPase KRas, N-terminally processed. GTP is bound by residues 10 to 18 (GAGGVGKSA), 29 to 35 (VDEYDPT), and 59 to 60 (AG). Positions 32-40 (YDPTIEDSY) match the Effector region motif. At lysine 104 the chain carries N6-acetyllysine. Position 116–119 (116–119 (NKCD)) interacts with GTP. Positions 166–185 (HKEKMSKDGKKKKKKSKTKC) are hypervariable region. The segment at 167–188 (KEKMSKDGKKKKKKSKTKCIIM) is disordered. Position 185 is a cysteine methyl ester (cysteine 185). The S-farnesyl cysteine moiety is linked to residue cysteine 185. The propeptide at 186 to 188 (IIM) is removed in mature form.

This sequence belongs to the small GTPase superfamily. Ras family. As to quaternary structure, interacts with PHLPP. Interacts (active GTP-bound form preferentially) with RGS14. Interacts (when farnesylated) with PDE6D; this promotes dissociation from the cell membrane. Interacts with SOS1. Interacts (when farnesylated) with GPR31. Interacts with RAP1GDS1. Interacts (active GTP-bound form) with both SHOC2 and PP1c (all isoforms) to form a tertiary complex; SHOC2 and PP1c preferably bind M-Ras/MRAS, but they also bind K-Ras/KRAS, N-Ras/NRAS and H-Ras/HRAS. Interacts (GTP-bound form) with MAPKAP1/SIN1; inhibiting K-Ras/KRAS activity. Post-translationally, acetylation at Lys-104 prevents interaction with guanine nucleotide exchange factors (GEFs).

The protein resides in the cell membrane. It is found in the cytoplasm. It localises to the cytosol. It carries out the reaction GTP + H2O = GDP + phosphate + H(+). Alternates between an inactive form bound to GDP and an active form bound to GTP. Activated by a guanine nucleotide-exchange factor (GEF) and inactivated by a GTPase-activating protein (GAP). Interaction with SOS1 promotes exchange of bound GDP to GTP. Its function is as follows. Ras proteins bind GDP/GTP and possess intrinsic GTPase activity. Plays an important role in the regulation of cell proliferation. Plays a role in promoting oncogenic events by inducing transcriptional silencing of tumor suppressor genes (TSGs) in colorectal cancer (CRC) cells in a ZNF304-dependent manner. In Monodelphis domestica (Gray short-tailed opossum), this protein is GTPase KRas (KRAS).